A 334-amino-acid polypeptide reads, in one-letter code: DCN1-like protein 3 (334 aa).

A DCUN1 domain is found at 112-301; sequence VSHQTLSKLF…LFDDFVDYEK (190 aa). Positions 308 to 334 are disordered; that stretch reads SGIHDDDNNNDDPLQSHVKAEDPGLVS. Residues 325–334 show a composition bias toward basic and acidic residues; the sequence is VKAEDPGLVS.

The protein localises to the cell membrane. Its function is as follows. Promotes neddylation of cullin components of SCF-type E3 ubiquitin ligase complexes and thus regulates SCF-type complex activity. Function promotes cell proliferation. The protein is DCN1-like protein 3 of Drosophila melanogaster (Fruit fly).